A 282-amino-acid chain; its full sequence is Phosphate transport system permease protein PstA (282 aa).

Transmembrane regions (helical) follow at residues 22-42 (LSYI…FTLI), 71-91 (LIGS…IGVL), 111-131 (FLND…VYSL), 136-156 (IEHF…IPIV), 198-218 (ILTG…PLLF), and 254-274 (NLAW…NIFT). The 204-residue stretch at 71–274 (LIGSFFIVGA…LFVLCLNIFT (204 aa)) folds into the ABC transmembrane type-1 domain.

The protein belongs to the binding-protein-dependent transport system permease family. CysTW subfamily.

It localises to the cell inner membrane. Its function is as follows. Part of the binding-protein-dependent transport system for phosphate; probably responsible for the translocation of the substrate across the membrane. The polypeptide is Phosphate transport system permease protein PstA (pstA) (Haemophilus influenzae (strain ATCC 51907 / DSM 11121 / KW20 / Rd)).